We begin with the raw amino-acid sequence, 181 residues long: NAD(P)H-quinone oxidoreductase subunit I, chloroplastic (181 aa).

4Fe-4S ferredoxin-type domains lie at 52–81 (GRIHFEFDKCIACEVCVRVCPINLPVVDWE) and 92–121 (KSYSIDFGVCIFCGNCVEFCPTNCLSMTEE). Residues Cys61, Cys64, Cys67, Cys71, Cys101, Cys104, Cys107, and Cys111 each coordinate [4Fe-4S] cluster.

It belongs to the complex I 23 kDa subunit family. NDH is composed of at least 16 different subunits, 5 of which are encoded in the nucleus. [4Fe-4S] cluster is required as a cofactor.

The protein resides in the plastid. It localises to the chloroplast thylakoid membrane. The enzyme catalyses a plastoquinone + NADH + (n+1) H(+)(in) = a plastoquinol + NAD(+) + n H(+)(out). It catalyses the reaction a plastoquinone + NADPH + (n+1) H(+)(in) = a plastoquinol + NADP(+) + n H(+)(out). Its function is as follows. NDH shuttles electrons from NAD(P)H:plastoquinone, via FMN and iron-sulfur (Fe-S) centers, to quinones in the photosynthetic chain and possibly in a chloroplast respiratory chain. The immediate electron acceptor for the enzyme in this species is believed to be plastoquinone. Couples the redox reaction to proton translocation, and thus conserves the redox energy in a proton gradient. In Staurastrum punctulatum (Green alga), this protein is NAD(P)H-quinone oxidoreductase subunit I, chloroplastic.